The chain runs to 263 residues: Oxidoreductase tpcG (263 aa).

Belongs to the avfA family. As to expression, specifically expressed in conidia.

It participates in secondary metabolite biosynthesis. Its function is as follows. Oxidoreductase; part of the gene cluster that mediates the biosynthesis of trypacidin, a mycotoxin with antiprotozoal activity and that plays a role in the infection process. The pathway begins with the synthesis of atrochrysone thioester by the polyketide synthase (PKS) tpcC. The atrochrysone carboxyl ACP thioesterase tpcB then breaks the thioester bond and releases the atrochrysone carboxylic acid from tpcC. The decarboxylase tpcK converts atrochrysone carboxylic acid to atrochrysone which is further reduced into emodin anthrone. The next step is performed by the emodin anthrone oxygenase tpcL that catalyzes the oxidation of emodinanthrone to emodin. Emodin O-methyltransferase encoded by tpcA catalyzes methylation of the 8-hydroxy group of emodin to form questin. Ring cleavage of questin by questin oxidase tpcI leads to desmethylsulochrin via several intermediates including questin epoxide. Another methylation step catalyzed by tpcM leads to the formation of sulochrin which is further converted to monomethylsulfochrin by tpcH. Finally, the tpcJ catalyzes the conversion of monomethylsulfochrin to trypacidin. Trypacidin is toxic for human pulmonary and bronchial epithelial cells by initiating the intracellular formation of nitric oxide (NO) and hydrogen peroxide (H(2)O(2)), thus triggering host necrotic cell death. The trypacidin pathway is also able to produce endocrocin via a distinct route from the endocrocin Enc pathway. This chain is Oxidoreductase tpcG, found in Aspergillus fumigatus (strain ATCC MYA-4609 / CBS 101355 / FGSC A1100 / Af293) (Neosartorya fumigata).